The chain runs to 202 residues: Large ribosomal subunit protein bL17 (202 aa).

The span at 130–142 (AAPAATAPAPVEE) shows a compositional bias: low complexity. The disordered stretch occupies residues 130–202 (AAPAATAPAP…TEESTEDDKA (73 aa)). Acidic residues-rich tracts occupy residues 143-168 (APAE…EASP) and 177-202 (QPVE…DDKA).

This sequence belongs to the bacterial ribosomal protein bL17 family. Part of the 50S ribosomal subunit. Contacts protein L32.

This Nocardioides sp. (strain ATCC BAA-499 / JS614) protein is Large ribosomal subunit protein bL17.